The sequence spans 454 residues: MSNLPSEPEFEQAYKELAYTLENSSLFQKHPEYRTALTVASIPERVIQFRVVWEDDNGNVQVNRGYRVQFNSALGPYKGGLRLHPSVNLSILKFLGFEQIFKNALTGLSMGGGKGGADFDPKGKSDAEIRRFCCAFMAELHKHIGADTDVPAGDIGVGGREIGYMFGAYRKAANRFEGVLTGKGLSWGGSLIRPEATGYGLVYYVGHMLEYSGAGSYAGKRVALSGSGNVAQYAALKLIELGATVVSLSDSKGALVATGESGITVEDINAVMAIKEARQSLTSFQHAGHLKWIEGARPWLHVGKVDIALPCATQNEVSKEEAEGLLAAGCKFVAEGSNMGCTLEAIEVFENNRKEKKGEAVWYAPGKAANCGGVAVSGLEMAQNSQRLNWTQAEVDEKLKDIMKNAFFNGLNTAKTYVEAAEGELPSLVAGSNIAGFVKVAQAMHDQGDWWSKN.

Serine 2 carries the N-acetylserine modification. The active site involves lysine 114.

This sequence belongs to the Glu/Leu/Phe/Val dehydrogenases family. As to quaternary structure, homohexamer.

The enzyme catalyses L-glutamate + NADP(+) + H2O = 2-oxoglutarate + NH4(+) + NADPH + H(+). The sequence is that of NADP-specific glutamate dehydrogenase (gdh) from Neurospora crassa (strain ATCC 24698 / 74-OR23-1A / CBS 708.71 / DSM 1257 / FGSC 987).